We begin with the raw amino-acid sequence, 176 residues long: Tubulin polymerization-promoting protein family member 3 (176 aa).

A disordered region spans residues 132–151; it reads TGSHKERFDQTGKGKGKSGR. Residues 134–151 are compositionally biased toward basic and acidic residues; sequence SHKERFDQTGKGKGKSGR.

It belongs to the TPPP family.

The protein resides in the cytoplasm. The protein localises to the cytoskeleton. Its function is as follows. Regulator of microtubule dynamic that has microtubule bundling activity. The polypeptide is Tubulin polymerization-promoting protein family member 3 (tppp3) (Xenopus laevis (African clawed frog)).